Here is a 212-residue protein sequence, read N- to C-terminus: Ras-related protein Rab-21 (212 aa).

Residues 14–21, 62–66, and 120–123 contribute to the GTP site; these read GEGCVGKT, DTAGQ, and NKCD. The interval 181–212 is disordered; it reads TNTTGQTTNRSERIPIVPDSDSGNKQPGCCSN. The segment covering 201 to 212 has biased composition (polar residues); sequence DSGNKQPGCCSN. 2 S-geranylgeranyl cysteine lipidation sites follow: C209 and C210.

It belongs to the small GTPase superfamily. Rab family. Interacts with LIM domain proteins limF and ChLim.

Its subcellular location is the cell membrane. In terms of biological role, involved in the regulation of phagocytosis. In Dictyostelium discoideum (Social amoeba), this protein is Ras-related protein Rab-21 (rab21).